The primary structure comprises 156 residues: ATP synthase subunit b (156 aa).

The helical transmembrane segment at 3–23 (INFTLLAQALAFAGLIWIIAT) threads the bilayer.

This sequence belongs to the ATPase B chain family. As to quaternary structure, F-type ATPases have 2 components, F(1) - the catalytic core - and F(0) - the membrane proton channel. F(1) has five subunits: alpha(3), beta(3), gamma(1), delta(1), epsilon(1). F(0) has three main subunits: a(1), b(2) and c(10-14). The alpha and beta chains form an alternating ring which encloses part of the gamma chain. F(1) is attached to F(0) by a central stalk formed by the gamma and epsilon chains, while a peripheral stalk is formed by the delta and b chains.

The protein localises to the cell membrane. Its function is as follows. F(1)F(0) ATP synthase produces ATP from ADP in the presence of a proton or sodium gradient. F-type ATPases consist of two structural domains, F(1) containing the extramembraneous catalytic core and F(0) containing the membrane proton channel, linked together by a central stalk and a peripheral stalk. During catalysis, ATP synthesis in the catalytic domain of F(1) is coupled via a rotary mechanism of the central stalk subunits to proton translocation. Functionally, component of the F(0) channel, it forms part of the peripheral stalk, linking F(1) to F(0). This chain is ATP synthase subunit b, found in Stenotrophomonas maltophilia (strain K279a).